The sequence spans 103 residues: ATP synthase subunit f, mitochondrial (103 aa).

A mitochondrion-targeting transit peptide spans 1–6 (MIFRRQ).

In terms of assembly, F-type ATP synthases have 2 components, the catalytic core F(1) and the membrane-embedded component F(0), linked together by a central stalk and a peripheral stalk. The central stalk, also called rotor shaft, is often seen as part of F(1). The peripheral stalk is seen as part of F(0). F(0) contains the membrane channel next to the rotor. F-type ATP synthases form dimers but each monomer functions independently in ATP generation. The dimer consists of 17 different polypeptides: ATP1 (subunit alpha, 3 molecules per monomer, part of F(1)), ATP2 (subunit beta, 3 copies per monomer, part of F(1)), ATP3 (subunit gamma, part of the central stalk), ATP4 (subunit b, part of the peripheral stalk), ATP5/OSCP (subunit 5/OSCP, part of the peripheral stalk), ATP6 (subunit a, part of the peripheral stalk), ATP7 (subunit d, part of the peripheral stalk), ATP8 (subunit 8, part of the peripheral stalk), OLI1 (subunit c, part of the rotor, 10 molecules per monomer), ATP14 (subunit h, part of the peripheral stalk), ATP15 (subunit epsilon, part of the central stalk), ATP16 (subunit delta, part of the central stalk), ATP17 (subunit f, part of the peripheral stalk), ATP18 (subunit i/j, part of the peripheral stalk), ATP19 (subunit k, dimer-specific, at interface between monomers), ATP20 (subunit g, at interface between monomers), TIM11 (subunit e, at interface between monomers).

Its subcellular location is the mitochondrion inner membrane. Mitochondrial membrane ATP synthase (F(1)F(0) ATP synthase or Complex V) produces ATP from ADP in the presence of a proton gradient across the membrane which is generated by electron transport complexes of the respiratory chain. F-type ATP synthases consist of two structural domains, F(1) - containing the extramembraneous catalytic core, and F(0) - containing the membrane proton channel, linked together by a central stalk and a peripheral stalk. During catalysis, ATP synthesis in the catalytic domain of F(1) is coupled via a rotary mechanism of the central stalk subunits to proton translocation. Part of the complex F(0) domain. Minor subunit located with subunit a/ATP6 in the membrane. The chain is ATP synthase subunit f, mitochondrial from Yarrowia lipolytica (strain CLIB 122 / E 150) (Yeast).